A 130-amino-acid chain; its full sequence is Protein ApaG (130 aa).

An ApaG domain is found at 3–127 (SAVTQDIQIT…FSLDSPFVRR (125 aa)).

The sequence is that of Protein ApaG from Methylocella silvestris (strain DSM 15510 / CIP 108128 / LMG 27833 / NCIMB 13906 / BL2).